The following is a 463-amino-acid chain: Heterogeneous nuclear ribonucleoprotein K (463 aa).

Position 1 is an N-acetylmethionine (methionine 1). Residues 1 to 37 (METEQPEETFPNTETNGEFGKRPAEDMEEEQAFKRSR) form a disordered region. The tract at residues 1–276 (METEQPEETF…GRGGRPMPPS (276 aa)) is necessary for interaction with DDX1. The span at 19 to 37 (FGKRPAEDMEEEQAFKRSR) shows a compositional bias: basic and acidic residues. The residue at position 34 (lysine 34) is an N6-acetyllysine; alternate. Lysine 34 is covalently cross-linked (Glycyl lysine isopeptide (Lys-Gly) (interchain with G-Cter in SUMO1); alternate). Lysine 34 participates in a covalent cross-link: Glycyl lysine isopeptide (Lys-Gly) (interchain with G-Cter in SUMO2); alternate. The interval 35–197 (RSRNTDEMVE…STDRVVLIGG (163 aa)) is interaction with ASFV p30. At serine 36 the chain carries Phosphoserine. Threonine 39 is subject to Phosphothreonine. Residues 42–104 (MVELRILLQS…ETIGEILKKI (63 aa)) enclose the KH 1 domain. Glycyl lysine isopeptide (Lys-Gly) (interchain with G-Cter in SUMO2) cross-links involve residues lysine 52 and lysine 60. 2 repeat units span residues 54-76 (AGAV…NASV) and 59-62 (GKGG). Residues 54–421 (AGAVIGKGGK…QIRHESGASI (368 aa)) form a 2 X 22 AA approximate repeats region. A 5 X 4 AA repeats of G-X-G-G region spans residues 59-407 (GKGGKNIKAL…LAGSIIGKGG (349 aa)). Serine 75 and serine 116 each carry phosphoserine. Residues 144–209 (DCELRLLIHQ…DRVVECIKII (66 aa)) form the KH 2 domain. Residue lysine 163 forms a Glycyl lysine isopeptide (Lys-Gly) (interchain with G-Cter in SUMO1); alternate linkage. Residue lysine 163 forms a Glycyl lysine isopeptide (Lys-Gly) (interchain with G-Cter in SUMO2); alternate linkage. Position 198 is an N6-acetyllysine (lysine 198). The interval 209–337 (ILDLISESPI…RPGDRYDGMV (129 aa)) is interaction with ZIK1. 2 positions are modified to phosphoserine: serine 214 and serine 216. Lysine 219 is covalently cross-linked (Glycyl lysine isopeptide (Lys-Gly) (interchain with G-Cter in SUMO2); alternate). Lysine 219 carries the post-translational modification N6-succinyllysine; alternate. Residues 236–273 (YGGFTMMFDDRRGRPVGFPMRGRGGFDRMPPGRGGRPM) are RNA-binding RGG-box. A run of 3 repeats spans residues 245 to 250 (DRRGRP), 257 to 260 (GRGG), and 267 to 270 (GRGG). The 2 X 6 AA approximate repeats stretch occupies residues 245-329 (DRRGRPVGFP…LMAYDRRGRP (85 aa)). The disordered stretch occupies residues 250–329 (PVGFPMRGRG…LMAYDRRGRP (80 aa)). Residues 252 to 266 (GFPMRGRGGFDRMPP) are compositionally biased toward low complexity. Over residues 276-285 (SRRDYDDMSP) the composition is skewed to basic and acidic residues. Serine 284 carries the post-translational modification Phosphoserine. Residues 295 to 298 (GRGG) form a 3-4 repeat. Arginine 316 bears the Omega-N-methylarginine mark. The stretch at 324–329 (DRRGRP) is one 2-2 repeat. Omega-N-methylarginine is present on arginine 377. At serine 379 the chain carries Phosphoserine. Tyrosine 380 bears the Phosphotyrosine mark. The region spanning 387–451 (IITTQVTIPK…DQIQNAQYLL (65 aa)) is the KH 3 domain. Repeat copies occupy residues 399–421 (AGSI…GASI) and 404–407 (GKGG). An N6-acetyllysine; alternate modification is found at lysine 405. Residue lysine 405 forms a Glycyl lysine isopeptide (Lys-Gly) (interchain with G-Cter in SUMO2); alternate linkage. Serine 420 is modified (phosphoserine). Lysine 422 participates in a covalent cross-link: Glycyl lysine isopeptide (Lys-Gly) (interchain with G-Cter in SUMO1); alternate. Lysine 422 participates in a covalent cross-link: Glycyl lysine isopeptide (Lys-Gly) (interchain with G-Cter in SUMO2); alternate. Lysine 422 participates in a covalent cross-link: Glycyl lysine isopeptide (Lys-Gly) (interchain with G-Cter in SUMO); alternate.

As to quaternary structure, identified in the spliceosome C complex. Part of a transcription inhibitory ribonucleoprotein complex composed at least of the circular RNA circZNF827, ZNF827 and HNRNPL. Interacts with RBM42 and ZIK1. Interacts with BRDT. Interacts with ANKRD28. Interacts with ASFV p30 protein. Interacts with DDX1. Interacts with MDM2; this interaction leads to ubiquitination and proteasomal degradation. Interacts with p53/TP53. Interacts with IVNS1ABP (via BACK domain); the interaction is direct. Interacts with PPIA/CYPA. (Microbial infection) Interacts with HCV core protein. Arg-296 and Arg-299 are dimethylated, probably to asymmetric dimethylarginine. In terms of processing, sumoylated by CBX4. Sumoylation is increased upon DNA damage, such as that produced by doxorubicin, etoposide, UV light and camptothecin, due to enhanced CBX4 phosphorylation by HIPK2 under these conditions. Post-translationally, ubiquitinated by MDM2. Doxorubicin treatment does not affect monoubiquitination, but slightly decreases HNRNPK poly-ubiquitination. O-glycosylated (O-GlcNAcylated), in a cell cycle-dependent manner.

It is found in the cytoplasm. The protein resides in the nucleus. It localises to the nucleoplasm. Its subcellular location is the cell projection. The protein localises to the podosome. Functionally, one of the major pre-mRNA-binding proteins. Binds tenaciously to poly(C) sequences. Likely to play a role in the nuclear metabolism of hnRNAs, particularly for pre-mRNAs that contain cytidine-rich sequences. Can also bind poly(C) single-stranded DNA. Plays an important role in p53/TP53 response to DNA damage, acting at the level of both transcription activation and repression. When sumoylated, acts as a transcriptional coactivator of p53/TP53, playing a role in p21/CDKN1A and 14-3-3 sigma/SFN induction. As far as transcription repression is concerned, acts by interacting with long intergenic RNA p21 (lincRNA-p21), a non-coding RNA induced by p53/TP53. This interaction is necessary for the induction of apoptosis, but not cell cycle arrest. As part of a ribonucleoprotein complex composed at least of ZNF827, HNRNPL and the circular RNA circZNF827 that nucleates the complex on chromatin, may negatively regulate the transcription of genes involved in neuronal differentiation. The polypeptide is Heterogeneous nuclear ribonucleoprotein K (HNRNPK) (Homo sapiens (Human)).